A 673-amino-acid chain; its full sequence is DNA ligase (673 aa).

Residues Asp33–Asp37, Ser82–Leu83, and Glu117 contribute to the NAD(+) site. The active-site N6-AMP-lysine intermediate is Lys119. The NAD(+) site is built by Arg140, Glu177, Lys295, and Lys319. Cys413, Cys416, Cys431, and Cys436 together coordinate Zn(2+). The BRCT domain occupies Ala595–Lys673.

This sequence belongs to the NAD-dependent DNA ligase family. LigA subfamily. Requires Mg(2+) as cofactor. It depends on Mn(2+) as a cofactor.

The catalysed reaction is NAD(+) + (deoxyribonucleotide)n-3'-hydroxyl + 5'-phospho-(deoxyribonucleotide)m = (deoxyribonucleotide)n+m + AMP + beta-nicotinamide D-nucleotide.. DNA ligase that catalyzes the formation of phosphodiester linkages between 5'-phosphoryl and 3'-hydroxyl groups in double-stranded DNA using NAD as a coenzyme and as the energy source for the reaction. It is essential for DNA replication and repair of damaged DNA. In Synechococcus sp. (strain JA-3-3Ab) (Cyanobacteria bacterium Yellowstone A-Prime), this protein is DNA ligase.